The sequence spans 213 residues: 5-deoxy-D-ribulose 1-phosphate aldolase (213 aa).

Substrate is bound by residues 28–29 (GN), 45–46 (SG), and 74–76 (SSE). Glu76 serves as the catalytic Proton donor/acceptor. Glu76, His95, His97, and His157 together coordinate Mn(2+).

It belongs to the aldolase class II family. As to quaternary structure, forms homooligomers, possibly homotetramers. Requires Mn(2+) as cofactor.

The enzyme catalyses 5-deoxy-D-ribulose 1-phosphate = dihydroxyacetone phosphate + acetaldehyde. Its pathway is carbohydrate degradation. Its function is as follows. Catalyzes the cleavage of 5-deoxy-D-ribulose 1-phosphate to yield dihydroxyacetone phosphate (DHAP) and acetaldehyde, as part of a 5-deoxyribose salvage pathway that recycles this toxic radical SAM enzyme by-product to mainstream metabolites. Is also able to catalyze the reverse reaction, using several aldehydes as substrate, with acetaldehyde being the preferred substrate. The sequence is that of 5-deoxy-D-ribulose 1-phosphate aldolase from Bacillus thuringiensis serovar kurstaki (strain ATCC 35866 / NRRL B-4488 / HD73).